We begin with the raw amino-acid sequence, 199 residues long: NAD(P)H dehydrogenase (quinone) (199 aa).

Residues valine 4–isoleucine 190 form the Flavodoxin-like domain. FMN-binding positions include serine 10 to isoleucine 15 and threonine 78 to phenylalanine 80. Tyrosine 12 serves as a coordination point for NAD(+). Tryptophan 98 lines the substrate pocket. Residues serine 113–glycine 119 and histidine 134 each bind FMN.

It belongs to the WrbA family. FMN is required as a cofactor.

It catalyses the reaction a quinone + NADH + H(+) = a quinol + NAD(+). The catalysed reaction is a quinone + NADPH + H(+) = a quinol + NADP(+). This chain is NAD(P)H dehydrogenase (quinone), found in Rhodopseudomonas palustris (strain BisA53).